The chain runs to 608 residues: Histone-arginine methyltransferase CARM1 (608 aa).

The segment at 28–139 (ATVSVFPGAR…GHTLERSVFS (112 aa)) is interaction with C9orf72. The SAM-dependent MTase PRMT-type domain maps to 147 to 454 (AVQYFQFYGY…KRQSYDISIV (308 aa)). The S-adenosyl-L-methionine site is built by glutamine 160, arginine 169, glycine 193, and glutamate 215. Serine 217 bears the Phosphoserine mark. Lysine 228 is covalently cross-linked (Glycyl lysine isopeptide (Lys-Gly) (interchain with G-Cter in ubiquitin)). Residues glutamate 244 and serine 272 each coordinate S-adenosyl-L-methionine. The tract at residues 347-380 (RILMAKSVKYTVNFLEAKEGDLHRIEIPFKFHML) is required for nuclear translocation. A transactivation domain region spans residues 500 to 608 (TGSTYNLSSG…IPTNTMHYGS (109 aa)). Position 551 is a dimethylated arginine (arginine 551).

The protein belongs to the class I-like SAM-binding methyltransferase superfamily. Protein arginine N-methyltransferase family. As to quaternary structure, homodimer. Interacts with NR1H4. Interacts with SNRPC. Interacts with the C-terminus of NCOA2/GRIP1, NCO3/ACTR and NCOA1/SRC1. Part of a complex consisting of CARM1, EP300/P300 and NCOA2/GRIP1. Interacts with FLII, TP53, myogenic factor MEF2, EP300/P300, TRIM24, CREBBP and CTNNB1. Interacts with RELA. Identified in a complex containing CARM1, TRIM24 and NCOA2/GRIP1. Interacts with NCOA3/SRC3. Interacts with SKP2. Interacts (via PH domain-like fold) with C9orf72. Interacts with PARP1; promoting PARP1 recruimtent to replication forks. In terms of processing, phosphorylation at Ser-217 is strongly increased during mitosis, and decreases rapidly to a very low, basal level after entry into the G1 phase of the cell cycle. Phosphorylation at Ser-217 interferes with S-adenosyl-L-methionine binding and strongly reduces methyltransferase activity. Phosphorylation at Ser-217 may promote cytosolic location. Auto-methylated on Arg-551. Methylation enhances transcription coactivator activity. Methylation is required for its role in the regulation of pre-mRNA alternative splicing. Post-translationally, ubiquitinated by E3 ubiquitin-protein ligase complex containing FBXO9 at Lys-228; leading to proteasomal degradation. In terms of tissue distribution, ubiquitously expressed. Within the brain, present in proliferating cells from lateral ventricular zone and dentate gyrus (at protein level).

The protein resides in the nucleus. It is found in the cytoplasm. Its subcellular location is the chromosome. It catalyses the reaction L-arginyl-[protein] + 2 S-adenosyl-L-methionine = N(omega),N(omega)-dimethyl-L-arginyl-[protein] + 2 S-adenosyl-L-homocysteine + 2 H(+). Its activity is regulated as follows. Methylation of H3R17 (H3R17me) by CARM1 is stimulated by preacetylation of H3 'Lys-18' (H3K18ac) H3 'Lys-23' (H3K23ac) by EP300 and blocked by citrullination of H3 'Arg-17' (H3R17ci) by PADI4. Methylates (mono- and asymmetric dimethylation) the guanidino nitrogens of arginyl residues in several proteins involved in DNA packaging, transcription regulation, pre-mRNA splicing, and mRNA stability. Recruited to promoters upon gene activation together with histone acetyltransferases from EP300/P300 and p160 families, methylates histone H3 at 'Arg-17' (H3R17me), forming mainly asymmetric dimethylarginine (H3R17me2a), leading to activation of transcription via chromatin remodeling. During nuclear hormone receptor activation and TCF7L2/TCF4 activation, acts synergically with EP300/P300 and either one of the p160 histone acetyltransferases NCOA1/SRC1, NCOA2/GRIP1 and NCOA3/ACTR or CTNNB1/beta-catenin to activate transcription. During myogenic transcriptional activation, acts together with NCOA3/ACTR as a coactivator for MEF2C. During monocyte inflammatory stimulation, acts together with EP300/P300 as a coactivator for NF-kappa-B. Acts as a coactivator for PPARG, promotes adipocyte differentiation and the accumulation of brown fat tissue. Plays a role in the regulation of pre-mRNA alternative splicing by methylation of splicing factors. Also seems to be involved in p53/TP53 transcriptional activation. Methylates EP300/P300, both at 'Arg-2142', which may loosen its interaction with NCOA2/GRIP1, and at 'Arg-580' and 'Arg-604' in the KIX domain, which impairs its interaction with CREB and inhibits CREB-dependent transcriptional activation. Also methylates arginine residues in RNA-binding proteins PABPC1, ELAVL1 and ELAV4, which may affect their mRNA-stabilizing properties and the half-life of their target mRNAs. Acts as a transcriptional coactivator of ACACA/acetyl-CoA carboxylase by enriching H3R17 methylation at its promoter, thereby positively regulating fatty acid synthesis. Independently of its methyltransferase activity, involved in replication fork progression: promotes PARP1 recruitment to replication forks, leading to poly-ADP-ribosylation of chromatin at replication forks and reduced fork speed. The chain is Histone-arginine methyltransferase CARM1 (Carm1) from Mus musculus (Mouse).